The primary structure comprises 87 residues: HssA/B-like protein 55 (87 aa).

Over residues 1–13 (MTILSAITSISRP) the composition is skewed to polar residues. A disordered region spans residues 1 to 31 (MTILSAITSISRPNKSSKSVVSSNGGSSLSM). The segment covering 14 to 31 (NKSSKSVVSSNGGSSLSM) has biased composition (low complexity).

This sequence belongs to the hssA/B family.

In Dictyostelium discoideum (Social amoeba), this protein is HssA/B-like protein 55 (hssl55).